A 481-amino-acid chain; its full sequence is MELRKSQVAMPVFLAIMSLMVSQVVFAEKDSGSMSPHDRALAEMQALKASLVRRNLPALVSPPPTPPQAVPGPRVYQVISYGADPTGKLDSTDAILKAMEEAFDGPNHGVLMQGINDLGGARIDLQGGSYLISRPLRFPSAGAGNLLISGGTLRASNDFPVDRYLIELKDESSKLQYIFEYITLRDLLIDCNYRGGAIAVINSLRTSIDNCYITRFGDTNGILVKSGHETYIRNSFLGQHITAGGDRGERSFSGTAINLMGNDNAVTDTVIFSARIGVMVSGQANLLSGVHCYNKATGFGGTGIYLRLPGLTQNRIVNSYLDYTGIVAEDPVQLQISGTFFLGDAFILLKSIAGYIRGVSIVDNMFSGSGHGVQIVQLDQRNTAFDDVGQVVVDRNSVNGMVEKSTVARGSVDGNGTSWTVDFNPVLLFPDLINHVQYTLVASEAGVFPLHALRNVSDNRVVVETNAPVTGTVYVTVNQGV.

The N-terminal stretch at 1–27 (MELRKSQVAMPVFLAIMSLMVSQVVFA) is a signal peptide. 3 PbH1 repeats span residues 203–226 (SLRT…LVKS), 261–282 (GNDN…MVSG), and 356–377 (IRGV…QIVQ). N-linked (GlcNAc...) asparagine glycosylation is found at Asn415 and Asn455.

Belongs to the glycosyl hydrolase 28 family. As to expression, expressed in the tapetum cells in the anthers and in the ovules of open flowers.

Its subcellular location is the secreted. The protein resides in the cell wall. The enzyme catalyses (1,4-alpha-D-galacturonosyl)n+m + H2O = (1,4-alpha-D-galacturonosyl)n + (1,4-alpha-D-galacturonosyl)m.. In terms of biological role, polygalacturonase required for degrading the pollen mother cell wall during microspore development. This is Polygalacturonase QRT3 (QRT3) from Arabidopsis thaliana (Mouse-ear cress).